We begin with the raw amino-acid sequence, 323 residues long: Probable inactive poly [ADP-ribose] polymerase SRO2 (323 aa).

In terms of domain architecture, PARP catalytic spans 31–257 (SSVSHAGSSF…FASRPSSPWV (227 aa)). In terms of domain architecture, RST spans 250–321 (SRPSSPWVSF…IKNHKNRNKV (72 aa)).

In terms of assembly, interacts with STO.

It is found in the nucleus. In terms of biological role, probable inactive ADP-ribosyltransferase that may be involved in stress and developmental responses. The chain is Probable inactive poly [ADP-ribose] polymerase SRO2 (SRO2) from Arabidopsis thaliana (Mouse-ear cress).